A 295-amino-acid polypeptide reads, in one-letter code: MSTNSRSNSRANFNNEIHDIGTAQNSSMPPTYYDRSLADIFPPHLLKKVVSEVVSTFLLVFVTCGAAGIYGSDKDRISQLGQSVAGGLIVTVMIYAVGHISGAHMNPAVTLAFAVFRHFPWIQVPFYWAAQFTGSICASFVLKAVLHPIAVLGTTTPTGPHWHSLVIEIIVTFNMMFVTLAVATDTRAVGELAGLAVGSAVCITSIFAGAVSGGSMNPARTLGPALASNLYTGLWIYFLGPVLGTLSGAWTYTYIRFEEAPSHKDMSQKLSSFKLRRLQSQSVAVDDDELDHIQV.

2 helical membrane passes run 49–69 (VVSE…AAGI) and 83–103 (SVAG…ISGA). The NPA 1 signature appears at 106–108 (NPA). The next 3 membrane-spanning stretches (helical) occupy residues 124 to 146 (VPFY…KAVL), 164 to 184 (SLVI…AVAT), and 192 to 212 (LAGL…GAVS). The short motif at 217 to 219 (NPA) is the NPA 2 element. The chain crosses the membrane as a helical span at residues 230 to 250 (LYTGLWIYFLGPVLGTLSGAW).

Belongs to the MIP/aquaporin (TC 1.A.8) family. NIP (TC 1.A.8.12) subfamily.

It is found in the membrane. In terms of biological role, aquaporins facilitate the transport of water and small neutral solutes across cell membranes. In Zea mays (Maize), this protein is Aquaporin NIP2-1 (NIP2-1).